A 281-amino-acid chain; its full sequence is Ribosomal RNA small subunit methyltransferase A (281 aa).

Residues N24, L26, G51, E72, D96, and N123 each contribute to the S-adenosyl-L-methionine site.

Belongs to the class I-like SAM-binding methyltransferase superfamily. rRNA adenine N(6)-methyltransferase family. RsmA subfamily.

The protein resides in the cytoplasm. It carries out the reaction adenosine(1518)/adenosine(1519) in 16S rRNA + 4 S-adenosyl-L-methionine = N(6)-dimethyladenosine(1518)/N(6)-dimethyladenosine(1519) in 16S rRNA + 4 S-adenosyl-L-homocysteine + 4 H(+). Specifically dimethylates two adjacent adenosines (A1518 and A1519) in the loop of a conserved hairpin near the 3'-end of 16S rRNA in the 30S particle. May play a critical role in biogenesis of 30S subunits. This is Ribosomal RNA small subunit methyltransferase A from Ureaplasma urealyticum serovar 10 (strain ATCC 33699 / Western).